Consider the following 622-residue polypeptide: ATP-dependent lipid A-core flippase (622 aa).

The next 5 membrane-spanning stretches (helical) occupy residues 32–52 (IVAALIAIFGVAATESYLAAF), 91–111 (VWGTENKIWTVPLFLIILVVI), 192–212 (IVLLYLNWQLSLIVVLMFPLL), 286–306 (SPFSELIASIALAVVIFIALW), and 312–332 (YTTIGEFMAFIVAMLQMYAPI). Residues 33–344 (VAALIAIFGV…LANISIPMQT (312 aa)) form the ABC transmembrane type-1 domain. The ABC transporter domain occupies 378–611 (FRNVDVEYRS…NGYYTMLRNI (234 aa)). 410–417 (GRSGSGKS) serves as a coordination point for ATP.

The protein belongs to the ABC transporter superfamily. Lipid exporter (TC 3.A.1.106) family. In terms of assembly, homodimer.

The protein localises to the cell inner membrane. The catalysed reaction is ATP + H2O + lipid A-core oligosaccharideSide 1 = ADP + phosphate + lipid A-core oligosaccharideSide 2.. In terms of biological role, involved in lipopolysaccharide (LPS) biosynthesis. Translocates lipid A-core from the inner to the outer leaflet of the inner membrane. Transmembrane domains (TMD) form a pore in the inner membrane and the ATP-binding domain (NBD) is responsible for energy generation. The protein is ATP-dependent lipid A-core flippase of Neisseria gonorrhoeae (strain ATCC 700825 / FA 1090).